A 485-amino-acid chain; its full sequence is Glutamate--tRNA ligase (485 aa).

Arginine 6 contacts L-glutamate. The 'HIGH' region motif lies at 9 to 19 (PSPTGNLHIGT). L-glutamate is bound by residues tyrosine 192 and 210–214 (RGEDH). The short motif at 248-252 (KLSKR) is the 'KMSKS' region element. Lysine 251 provides a ligand contact to ATP.

Belongs to the class-I aminoacyl-tRNA synthetase family. Glutamate--tRNA ligase type 1 subfamily. In terms of assembly, monomer. It depends on Does not require zinc. as a cofactor.

It localises to the cytoplasm. It carries out the reaction tRNA(Glu) + L-glutamate + ATP = L-glutamyl-tRNA(Glu) + AMP + diphosphate. In terms of biological role, non-discriminating glutamyl-tRNA synthetase. Catalyzes the attachment of glutamate to tRNA(Glu) in a two-step reaction: glutamate is first activated by ATP to form Glu-AMP and then transferred to the acceptor end of tRNA(Glu). Acylates both tRNA(Glu) and tRNA(Gln) with glutamate, but has 13-fold higher efficiency with tRNA(Glu). This chain is Glutamate--tRNA ligase (gltX), found in Thermosynechococcus vestitus (strain NIES-2133 / IAM M-273 / BP-1).